Here is a 295-residue protein sequence, read N- to C-terminus: Putative 23S rRNA (guanine-N(1)-)-methyltransferase (295 aa).

4 residues coordinate Zn(2+): C11, C14, C31, and H35. Residues Y74, 116-117, and H204 contribute to the S-adenosyl-L-methionine site; that span reads TG.

The protein belongs to the methyltransferase superfamily. RlmA family.

Functionally, confers strong resistance to mycinamicin (MM) and tylosin (TY). May function as methyltransferase. The polypeptide is Putative 23S rRNA (guanine-N(1)-)-methyltransferase (myrA) (Micromonospora griseorubida).